Reading from the N-terminus, the 660-residue chain is Chaperone protein DnaK (660 aa).

At Thr201 the chain carries Phosphothreonine; by autocatalysis. A disordered region spans residues 599-660; that stretch reads EAMQAQSASA…ADVEIVDKPE (62 aa). The segment covering 600–617 has biased composition (low complexity); sequence AMQAQSASAAASSAANAQ.

The protein belongs to the heat shock protein 70 family.

Its function is as follows. Acts as a chaperone. The sequence is that of Chaperone protein DnaK from Chlamydia trachomatis serovar A (strain ATCC VR-571B / DSM 19440 / HAR-13).